The primary structure comprises 674 residues: Linear primary-alkylsulfatase (674 aa).

A signal peptide spans 1–41 (MKLNALSTATHGSRSSPVKLWKFSTSFLLAASIIVSGQSWA). Residues histidine 192, histidine 194, aspartate 196, histidine 197, glutamate 303, and glutamate 322 each contribute to the Zn(2+) site. Residues 330–335 (NTYSLR) and arginine 340 contribute to the sulfate site. Histidine 367 provides a ligand contact to Zn(2+). Tyrosine 428 contacts sulfate.

It belongs to the metallo-beta-lactamase superfamily. Type III sulfatase family. Homodimer. Zn(2+) serves as cofactor.

Its subcellular location is the periplasm. The enzyme catalyses a primary linear alkyl sulfate ester + H2O = a primary alcohol + sulfate + H(+). Inhibited by EDTA. Slightly activated in the presence of Ca(2+). Alkylsulfatase that cleaves primary alkyl sulfates such as sodium octyl sulfate and the widely used detergent sodium dodecyl sulfate (SDS). This chain is Linear primary-alkylsulfatase, found in Pseudomonas sp.